A 121-amino-acid chain; its full sequence is Immunoglobulin kappa variable 4-1 (121 aa).

The first 20 residues, 1–20 (MVLQTQVFISLLLWISGAYG), serve as a signal peptide directing secretion. Positions 21–43 (DIVMTQSPDSLAVSLGERATINC) are framework-1. One can recognise an Ig-like domain in the interval 21-121 (DIVMTQSPDS…YYCQQYYSTP (101 aa)). C43 and C114 are oxidised to a cystine. Positions 44 to 60 (KSSQSVLYSSNNKNYLA) are complementarity-determining-1. A framework-2 region spans residues 61–75 (WYQQKPGQPPKLLIY). The tract at residues 76-82 (WASTRES) is complementarity-determining-2. The interval 83 to 114 (GVPDRFSGSGSGTDFTLTISSLQAEDVAVYYC) is framework-3. The segment at 115 to 121 (QQYYSTP) is complementarity-determining-3.

As to quaternary structure, immunoglobulins are composed of two identical heavy chains and two identical light chains; disulfide-linked.

Its subcellular location is the secreted. The protein localises to the cell membrane. In terms of biological role, v segment of the variable domain of immunoglobulins light chain that participates in the antigen recognition. Immunoglobulins, also known as antibodies, are membrane-bound or secreted glycoproteins produced by B lymphocytes. In the recognition phase of humoral immunity, the membrane-bound immunoglobulins serve as receptors which, upon binding of a specific antigen, trigger the clonal expansion and differentiation of B lymphocytes into immunoglobulins-secreting plasma cells. Secreted immunoglobulins mediate the effector phase of humoral immunity, which results in the elimination of bound antigens. The antigen binding site is formed by the variable domain of one heavy chain, together with that of its associated light chain. Thus, each immunoglobulin has two antigen binding sites with remarkable affinity for a particular antigen. The variable domains are assembled by a process called V-(D)-J rearrangement and can then be subjected to somatic hypermutations which, after exposure to antigen and selection, allow affinity maturation for a particular antigen. The polypeptide is Immunoglobulin kappa variable 4-1 (Homo sapiens (Human)).